Here is a 298-residue protein sequence, read N- to C-terminus: MSNDIDLINRLGPSAMDQDHAYLAFSAMRTSGHRHGAFLDAAATAAKCAIYMTYLEQGQNLRMTGHLHHLEPKRVKIIVEEVRQALTEGKLLKMLGSQEPRYLIQLPYVWLEKYPWQPGRSRVPGTSLTSEEKRQIEQKLPSNLPDAQLVSSFEFLDLIEFLHKRSQEDLPPEHQMPLSQALGEHIKRRLLYSGTVTRIDSPWGMPFYALTRPFYAPADDQERTYIMVEDTARYFRMMKNWAERRRNAMRLLEELDILPENGASYEELDEVIRAWADKYHQDGGIAVVLQTAFGERED.

Serine 152 is an active-site residue.

Belongs to the peptidase S48 family. In terms of assembly, homodimer; disulfide-linked.

Functionally, controls heterocyst differentiation. Dimerization is required for DNA-binding. Has both a protease and a DNA-binding activity. This Nostoc sp. (strain PCC 9229) protein is DNA-binding transcriptional activator HetR.